The sequence spans 335 residues: Ketol-acid reductoisomerase (NADP(+)) (335 aa).

A KARI N-terminal Rossmann domain is found at 5 to 185 (SKIYTDNDAN…GATRAGVIPT (181 aa)). NADP(+)-binding positions include 28-31 (YGSQ), Ser-56, and 86-89 (DMVQ). His-111 is a catalytic residue. Gly-137 contacts NADP(+). The region spanning 186–331 (TFKEETETDL…NQLRDLVQKG (146 aa)) is the KARI C-terminal knotted domain. Mg(2+)-binding residues include Asp-194, Glu-198, Glu-230, and Glu-234. Position 255 (Ser-255) interacts with substrate.

It belongs to the ketol-acid reductoisomerase family. Requires Mg(2+) as cofactor.

It catalyses the reaction (2R)-2,3-dihydroxy-3-methylbutanoate + NADP(+) = (2S)-2-acetolactate + NADPH + H(+). The enzyme catalyses (2R,3R)-2,3-dihydroxy-3-methylpentanoate + NADP(+) = (S)-2-ethyl-2-hydroxy-3-oxobutanoate + NADPH + H(+). It participates in amino-acid biosynthesis; L-isoleucine biosynthesis; L-isoleucine from 2-oxobutanoate: step 2/4. The protein operates within amino-acid biosynthesis; L-valine biosynthesis; L-valine from pyruvate: step 2/4. Its function is as follows. Involved in the biosynthesis of branched-chain amino acids (BCAA). Catalyzes an alkyl-migration followed by a ketol-acid reduction of (S)-2-acetolactate (S2AL) to yield (R)-2,3-dihydroxy-isovalerate. In the isomerase reaction, S2AL is rearranged via a Mg-dependent methyl migration to produce 3-hydroxy-3-methyl-2-ketobutyrate (HMKB). In the reductase reaction, this 2-ketoacid undergoes a metal-dependent reduction by NADPH to yield (R)-2,3-dihydroxy-isovalerate. The polypeptide is Ketol-acid reductoisomerase (NADP(+)) (Saccharolobus solfataricus (strain ATCC 35092 / DSM 1617 / JCM 11322 / P2) (Sulfolobus solfataricus)).